The chain runs to 239 residues: Phosphoribosylaminoimidazole-succinocarboxamide synthase (239 aa).

It belongs to the SAICAR synthetase family.

It carries out the reaction 5-amino-1-(5-phospho-D-ribosyl)imidazole-4-carboxylate + L-aspartate + ATP = (2S)-2-[5-amino-1-(5-phospho-beta-D-ribosyl)imidazole-4-carboxamido]succinate + ADP + phosphate + 2 H(+). Its pathway is purine metabolism; IMP biosynthesis via de novo pathway; 5-amino-1-(5-phospho-D-ribosyl)imidazole-4-carboxamide from 5-amino-1-(5-phospho-D-ribosyl)imidazole-4-carboxylate: step 1/2. In Chlorobium luteolum (strain DSM 273 / BCRC 81028 / 2530) (Pelodictyon luteolum), this protein is Phosphoribosylaminoimidazole-succinocarboxamide synthase.